Reading from the N-terminus, the 227-residue chain is Class I hydrophobin 4 (227 aa).

An N-terminal signal peptide occupies residues 1–18 (MQFTTFALLAVAAATASA). 4 disulfide bridges follow: cysteine 159-cysteine 207, cysteine 167-cysteine 200, cysteine 168-cysteine 186, and cysteine 208-cysteine 222. 2 N-linked (GlcNAc...) asparagine glycosylation sites follow: asparagine 190 and asparagine 219.

Belongs to the fungal hydrophobin family. Self-assembles to form functional amyloid fibrils called rodlets. Self-assembly into fibrillar rodlets occurs spontaneously at hydrophobic:hydrophilic interfaces and the rodlets further associate laterally to form amphipathic monolayers. As to expression, expressed in conidia and aerial hyphae.

The protein localises to the secreted. It is found in the cell wall. Functionally, aerial growth, conidiation, and dispersal of filamentous fungi in the environment rely upon a capability of their secreting small amphipathic proteins called hydrophobins (HPBs) with low sequence identity. Class I can self-assemble into an outermost layer of rodlet bundles on aerial cell surfaces, conferring cellular hydrophobicity that supports fungal growth, development and dispersal; whereas Class II form highly ordered films at water-air interfaces through intermolecular interactions but contribute nothing to the rodlet structure. Hcf-4 is a class I hydrophobin that is involved in the development and germination of conidia. This is Class I hydrophobin 4 from Passalora fulva (Tomato leaf mold).